The sequence spans 61 residues: 2S seed storage albumin protein (61 aa).

The protein belongs to the 2S seed storage albumins family. As to quaternary structure, the mature protein consists of a small and a large chain linked by 2 disulfide bonds.

In terms of biological role, this is a 2S seed storage protein. Inhibits cell-free protein synthesis. In Cucurbita moschata (Winter crookneck squash), this protein is 2S seed storage albumin protein.